A 339-amino-acid chain; its full sequence is MLNKRAQILLKTLVERYISEGQPVGSRSLSKFSGLDLSAATIRNVMADLEDMGLVASPHASAGRIPTHQGYRFFVDTLLVVKPLDVIEIHQLQDQLHPDNPSRLINSASQLLAELTRFAGVVVSPKRNSAIFRYIEFMSLSEKRVLLIIVTPEGDVQNRVLFTDRNYSQSELTEAANFINHNYAGCAIDEIRTRLQSELKQLRQDMTSLMTAAIDAGDAAIRENSEAVIVAGERKLLDVQDLSSNMASLKKLFDLFERKTALLQLLEFSRKAEGVQIFIGEECGVVTMDEFSVVTAPYRVDGKMVGTVAVIGPTRMAYERVIPVVDMTARLLSSALSLH.

The protein belongs to the HrcA family.

Negative regulator of class I heat shock genes (grpE-dnaK-dnaJ and groELS operons). Prevents heat-shock induction of these operons. The sequence is that of Heat-inducible transcription repressor HrcA from Nitrosospira multiformis (strain ATCC 25196 / NCIMB 11849 / C 71).